We begin with the raw amino-acid sequence, 85 residues long: U4-theraphotoxin-Hhn1s (85 aa).

Residues 1-22 (MKVTLIAILTCAAVLVLHTTAA) form the signal peptide. Residues 23 to 48 (EELEAESQLMEVGMPDTELAAVDEER) constitute a propeptide that is removed on maturation. 3 disulfide bridges follow: Cys-52-Cys-66, Cys-56-Cys-77, and Cys-71-Cys-82.

Belongs to the neurotoxin 12 (Hwtx-2) family. 02 (Hwtx-2) subfamily. In terms of tissue distribution, expressed by the venom gland.

It is found in the secreted. Its function is as follows. Postsynaptic neurotoxin. The protein is U4-theraphotoxin-Hhn1s of Cyriopagopus hainanus (Chinese bird spider).